The following is a 71-amino-acid chain: MFFTAILKSFKQAFIFKYKMTIFKSGHLVEALSSCPFSGHYDGFTKIYKGKKISTIKTPFIGSVILEYGNK.

This is an uncharacterized protein from Acheta domesticus (House cricket).